Consider the following 616-residue polypeptide: Proline--tRNA ligase (616 aa).

This sequence belongs to the class-II aminoacyl-tRNA synthetase family. ProS type 1 subfamily. In terms of assembly, homodimer.

It is found in the cytoplasm. The enzyme catalyses tRNA(Pro) + L-proline + ATP = L-prolyl-tRNA(Pro) + AMP + diphosphate. Catalyzes the attachment of proline to tRNA(Pro) in a two-step reaction: proline is first activated by ATP to form Pro-AMP and then transferred to the acceptor end of tRNA(Pro). As ProRS can inadvertently accommodate and process non-cognate amino acids such as alanine and cysteine, to avoid such errors it has two additional distinct editing activities against alanine. One activity is designated as 'pretransfer' editing and involves the tRNA(Pro)-independent hydrolysis of activated Ala-AMP. The other activity is designated 'posttransfer' editing and involves deacylation of mischarged Ala-tRNA(Pro). The misacylated Cys-tRNA(Pro) is not edited by ProRS. In Lactococcus lactis subsp. lactis (strain IL1403) (Streptococcus lactis), this protein is Proline--tRNA ligase.